The following is a 227-amino-acid chain: uncharacterized protein (227 aa).

3 helical membrane-spanning segments follow: residues 109 to 128, 173 to 192, and 199 to 221; these read MCNVGLVLMMVFAAFYFAGI, AILLSVTLLALTPVIGILLT, and ALRVIFLVIAVEFVYAIFRVMMG.

The protein localises to the cell membrane. This is an uncharacterized protein from Archaeoglobus fulgidus (strain ATCC 49558 / DSM 4304 / JCM 9628 / NBRC 100126 / VC-16).